The following is a 192-amino-acid chain: Superoxide dismutase [Fe] (192 aa).

Residues H27, H74, D157, and H161 each contribute to the Fe cation site.

The protein belongs to the iron/manganese superoxide dismutase family. Homodimer. Fe cation is required as a cofactor.

The catalysed reaction is 2 superoxide + 2 H(+) = H2O2 + O2. Its function is as follows. Destroys superoxide anion radicals which are normally produced within the cells and which are toxic to biological systems. The sequence is that of Superoxide dismutase [Fe] (sodB) from Legionella pneumophila subsp. pneumophila (strain Philadelphia 1 / ATCC 33152 / DSM 7513).